The chain runs to 508 residues: Hydroxymethylglutaryl-CoA synthase, mitochondrial (508 aa).

A mitochondrion-targeting transit peptide spans 1–37 (MQRLLTPVKRILQLTRAVQETSLTPARLLPVAHQRFS). At Lys-52 the chain carries N6-succinyllysine. The (3S)-3-hydroxy-3-methylglutaryl-CoA site is built by Glu-80 and Ala-81. N6-acetyllysine; alternate is present on Lys-83. Lys-83 carries the N6-succinyllysine; alternate modification. The active-site Proton donor/acceptor is Glu-132. Positions 166, 204, and 208 each coordinate (3S)-3-hydroxy-3-methylglutaryl-CoA. The active-site Acyl-thioester intermediate is Cys-166. Lys-221 carries the post-translational modification N6-succinyllysine. Lys-243 carries the N6-acetyllysine modification. Lys-256 is modified (N6-acetyllysine; alternate). N6-succinyllysine; alternate is present on Lys-256. (3S)-3-hydroxy-3-methylglutaryl-CoA contacts are provided by Ser-258 and His-301. His-301 (proton donor/acceptor) is an active-site residue. The residue at position 306 (Lys-306) is an N6-acetyllysine. A (3S)-3-hydroxy-3-methylglutaryl-CoA-binding site is contributed by Lys-310. Position 310 is an N6-acetyllysine; alternate (Lys-310). Lys-310 carries the post-translational modification N6-succinyllysine; alternate. Residue Lys-333 is modified to N6-succinyllysine. 4 positions are modified to N6-acetyllysine; alternate: Lys-342, Lys-350, Lys-354, and Lys-358. An N6-succinyllysine; alternate mark is found at Lys-342, Lys-350, Lys-354, and Lys-358. Positions 380 and 414 each coordinate (3S)-3-hydroxy-3-methylglutaryl-CoA. A Phosphoserine modification is found at Ser-433. Lys-437 carries the N6-acetyllysine modification. The residue at position 440 (Ser-440) is a Phosphoserine. An N6-acetyllysine; alternate modification is found at Lys-447. N6-succinyllysine; alternate is present on Lys-447. Ser-456 carries the post-translational modification Phosphoserine. Lys-473 carries the N6-acetyllysine; alternate modification. An N6-succinyllysine; alternate modification is found at Lys-473. Phosphoserine is present on Ser-477.

This sequence belongs to the thiolase-like superfamily. HMG-CoA synthase family. As to quaternary structure, homodimer. Post-translationally, succinylated. Desuccinylated by SIRT5. Succinylation, at least at Lys-83 and Lys-310, inhibits the enzymatic activity. Expression in liver is 200-fold higher than in any other tissue. Low expression in colon, kidney, testis, and pancreas. Very low expression in heart and skeletal muscle. Not detected in brain. As to expression, highest expression detected in heart and skeletal muscle.

The protein resides in the mitochondrion. It catalyses the reaction acetoacetyl-CoA + acetyl-CoA + H2O = (3S)-3-hydroxy-3-methylglutaryl-CoA + CoA + H(+). It functions in the pathway metabolic intermediate biosynthesis; (R)-mevalonate biosynthesis; (R)-mevalonate from acetyl-CoA: step 2/3. Functionally, catalyzes the first irreversible step in ketogenesis, condensing acetyl-CoA to acetoacetyl-CoA to form HMG-CoA, which is converted by HMG-CoA reductase (HMGCR) into mevalonate. This Homo sapiens (Human) protein is Hydroxymethylglutaryl-CoA synthase, mitochondrial (HMGCS2).